A 168-amino-acid polypeptide reads, in one-letter code: Photosystem I assembly protein Ycf3 (168 aa).

3 TPR repeats span residues 35–68 (AFTY…EIDP), 72–105 (SYIL…NPFL), and 120–153 (GEQA…TPGN).

This sequence belongs to the Ycf3 family.

Its subcellular location is the plastid. It is found in the chloroplast thylakoid membrane. Its function is as follows. Essential for the assembly of the photosystem I (PSI) complex. May act as a chaperone-like factor to guide the assembly of the PSI subunits. This is Photosystem I assembly protein Ycf3 from Helianthus annuus (Common sunflower).